The primary structure comprises 1266 residues: Neuronal-glial cell adhesion molecule (1266 aa).

An N-terminal signal peptide occupies residues 1–20 (MALPMVGLLLLLLLGGPGAA). Residues 21-1130 (ITIPPEYGAH…PQPGGGVCTK (1110 aa)) lie on the Extracellular side of the membrane. Ig-like C2-type domains follow at residues 36 to 128 (PELT…NVIA), 135 to 221 (PKEK…KEPL), 236 to 322 (PRLL…HSVT), 327 to 413 (PYWV…AFLH), 418 to 506 (PLRM…ALLE), and 510 to 597 (PTRI…AQLR). 4 cysteine pairs are disulfide-bonded: C58/C110, C154/C205, C260/C306, and C348/C397. N-linked (GlcNAc...) asparagine glycosylation is present at N97. N-linked (GlcNAc...) asparagine glycans are attached at residues N288, N390, N434, N472, and N498. An intrachain disulfide couples C441 to C490. Cysteines 532 and 581 form a disulfide. Fibronectin type-III domains lie at 603 to 698 (PSRD…TPPA), 700 to 804 (PERN…SGED), 809 to 930 (YPEN…TPEG), 934 to 1021 (PPEE…TKPE), and 1022 to 1118 (PPSP…TNGT). Residues 685-710 (EHHAPSAPIETPPAAPERNPGGVHGE) are disordered. N-linked (GlcNAc...) asparagine glycans are attached at residues N712 and N819. Positions 857–882 (SRRQAPPDPPQIPQSPAEDPPPFPPV) are disordered. Residues 862 to 881 (PPDPPQIPQSPAEDPPPFPP) are compositionally biased toward pro residues. Positions 914-916 (RGD) match the Cell attachment site motif. Residues 1004-1025 (STPRERPALQTVGSTKPEPPSP) are disordered. 4 N-linked (GlcNAc...) asparagine glycosylation sites follow: N1061, N1075, N1100, and N1116. The chain crosses the membrane as a helical span at residues 1131–1153 (GWFIGFVSSVVLLLLILLILCFI). The Cytoplasmic portion of the chain corresponds to 1154-1266 (KRSKGGKYSV…ASPCAGPPLD (113 aa)). A compositionally biased stretch (basic and acidic residues) spans 1163–1195 (VKDKEDTQVDSEARPMKDETFGEYRSLESEAEK). Positions 1163 to 1266 (VKDKEDTQVD…ASPCAGPPLD (104 aa)) are disordered. The span at 1199–1211 (SGSGAGSGVGSPG) shows a compositional bias: gly residues.

This sequence belongs to the immunoglobulin superfamily. L1/neurofascin/NgCAM family. As to quaternary structure, binds to itself and to axonin 1. Brain.

The protein resides in the cell membrane. Mediates the adhesion of neurons to neurons and neurons to glia. It is involved in neuronal migration, neurite fasciculation and outgrowth. The chain is Neuronal-glial cell adhesion molecule from Gallus gallus (Chicken).